We begin with the raw amino-acid sequence, 141 residues long: Hemoglobin subunit alpha (141 aa).

The Globin domain occupies 1 to 141 (VLSAADKTNV…VSTVLTSKYR (141 aa)). S3 bears the Phosphoserine mark. Residue K7 is modified to N6-succinyllysine. T8 carries the post-translational modification Phosphothreonine. An N6-succinyllysine modification is found at K11. Residue K16 is modified to N6-acetyllysine; alternate. An N6-succinyllysine; alternate modification is found at K16. Y24 is modified (phosphotyrosine). S35 is subject to Phosphoserine. An N6-succinyllysine modification is found at K40. At S49 the chain carries Phosphoserine. H58 lines the O2 pocket. H87 is a heme b binding site. Residue S102 is modified to Phosphoserine. Position 108 is a phosphothreonine (T108). Phosphoserine occurs at positions 124 and 131. T134 and T137 each carry phosphothreonine. Residue S138 is modified to Phosphoserine.

Belongs to the globin family. Heterotetramer of two alpha chains and two beta chains. In terms of tissue distribution, red blood cells.

Functionally, involved in oxygen transport from the lung to the various peripheral tissues. In Tamiasciurus hudsonicus (American red squirrel), this protein is Hemoglobin subunit alpha.